The sequence spans 288 residues: NADPH-dependent aldehyde reductase 1, chloroplastic (288 aa).

The span at 1–18 (MASEKQKQHAQPGKEHVM) shows a compositional bias: basic and acidic residues. The interval 1–32 (MASEKQKQHAQPGKEHVMESSPQFSSSDYQPS) is disordered. The span at 20–32 (SSPQFSSSDYQPS) shows a compositional bias: polar residues. 47 to 71 (SGIGRAVGYCFASEGATVAFTYVKG) lines the NADP(+) pocket. S179 provides a ligand contact to substrate. Residue Y192 is the Proton acceptor of the active site.

It belongs to the short-chain dehydrogenases/reductases (SDR) family.

The protein localises to the plastid. The protein resides in the chloroplast. Its function is as follows. Aldehyde reductase that catalyzes the reduction of the aldehyde carbonyl groups on saturated and alpha,beta-unsaturated aldehydes with more than 5 carbons. No activity on alpha,beta-unsaturated ketones. Can use propionaldehyde, butyraldehyde, methylglyoxal, (e)-2-pentenal, (E)-2-hexenal, (Z)-3-hexenal and (E)-2-nonenal as substrates, but not propenal (acrolein), crotonaldehyde, 2-butanone, 3-buten-2-one or 1-penten-3-one. May act as a short alcohol-polyol-sugar dehydrogenase possibly related to carbohydrate metabolism and the acquisition of desiccation tolerance. May also be involved in signal transduction. The polypeptide is NADPH-dependent aldehyde reductase 1, chloroplastic (Arabidopsis thaliana (Mouse-ear cress)).